Here is a 193-residue protein sequence, read N- to C-terminus: uncharacterized protein (193 aa).

2 disordered regions span residues 1 to 67 (MSGP…GPRS) and 110 to 160 (QRTP…LPGS). 2 stretches are compositionally biased toward low complexity: residues 50–64 (GPQRGPRNAAAARPG) and 148–160 (AGASPGSRLLPGS).

This is an uncharacterized protein from Homo sapiens (Human).